Here is a 54-residue protein sequence, read N- to C-terminus: Lectin alpha chain (54 aa).

The protein belongs to the leguminous lectin family. In terms of assembly, tetramer of two alpha and two beta chains.

This is Lectin alpha chain from Lathyrus tingitanus (Tangier pea).